We begin with the raw amino-acid sequence, 441 residues long: Protein MPE1 (441 aa).

A DWNN domain is found at 5–78 (IFYRFKSQRN…STSVIVKRSP (74 aa)). The segment at 180–197 (YMCYRCGGRDHWIKNCPT) adopts a CCHC-type zinc-finger fold. Serine 221 carries the phosphoserine modification. Basic and acidic residues predominate over residues 355–364 (KKQEELHGSS). The disordered stretch occupies residues 355–400 (KKQEELHGSSKDGNQPETKKMKLMDPTGTAGLNNNTSLPTSVNNGG). The span at 384-400 (AGLNNNTSLPTSVNNGG) shows a compositional bias: polar residues.

In terms of assembly, component of the cleavage and polyadenylation factor (CPF) complex, which is composed of PTI1, SYC1, SSU72, GLC7, MPE1, REF2, PFS2, PTA1, YSH1/BRR5, SWD2, CFT2/YDH1, YTH1, CFT1/YHH1, FIP1 and PAP1.

It localises to the nucleus. Component of the cleavage and polyadenylation factor (CPF) complex, which plays a key role in polyadenylation-dependent pre-mRNA 3'-end formation and cooperates with cleavage factors including the CFIA complex and NAB4/CFIB. The polypeptide is Protein MPE1 (MPE1) (Saccharomyces cerevisiae (strain ATCC 204508 / S288c) (Baker's yeast)).